Reading from the N-terminus, the 67-residue chain is Large ribosomal subunit protein bL28 (67 aa).

This sequence belongs to the bacterial ribosomal protein bL28 family.

The protein is Large ribosomal subunit protein bL28 of Nitratiruptor sp. (strain SB155-2).